Reading from the N-terminus, the 113-residue chain is Large ribosomal subunit protein bL19 (113 aa).

Belongs to the bacterial ribosomal protein bL19 family.

Its function is as follows. This protein is located at the 30S-50S ribosomal subunit interface and may play a role in the structure and function of the aminoacyl-tRNA binding site. The protein is Large ribosomal subunit protein bL19 of Mycobacteroides abscessus (strain ATCC 19977 / DSM 44196 / CCUG 20993 / CIP 104536 / JCM 13569 / NCTC 13031 / TMC 1543 / L948) (Mycobacterium abscessus).